Consider the following 98-residue polypeptide: Large ribosomal subunit protein bL28 (98 aa).

This sequence belongs to the bacterial ribosomal protein bL28 family.

The polypeptide is Large ribosomal subunit protein bL28 (Rhizobium etli (strain ATCC 51251 / DSM 11541 / JCM 21823 / NBRC 15573 / CFN 42)).